The chain runs to 432 residues: 3-phosphoshikimate 1-carboxyvinyltransferase (432 aa).

Positions 23, 24, and 28 each coordinate 3-phosphoshikimate. A phosphoenolpyruvate-binding site is contributed by K23. Phosphoenolpyruvate is bound by residues G99 and R127. 3-phosphoshikimate contacts are provided by S172, S173, Q174, S200, D317, N341, and K345. Q174 contributes to the phosphoenolpyruvate binding site. D317 functions as the Proton acceptor in the catalytic mechanism. Positions 349, 391, and 416 each coordinate phosphoenolpyruvate.

It belongs to the EPSP synthase family. In terms of assembly, monomer.

Its subcellular location is the cytoplasm. The catalysed reaction is 3-phosphoshikimate + phosphoenolpyruvate = 5-O-(1-carboxyvinyl)-3-phosphoshikimate + phosphate. The protein operates within metabolic intermediate biosynthesis; chorismate biosynthesis; chorismate from D-erythrose 4-phosphate and phosphoenolpyruvate: step 6/7. Catalyzes the transfer of the enolpyruvyl moiety of phosphoenolpyruvate (PEP) to the 5-hydroxyl of shikimate-3-phosphate (S3P) to produce enolpyruvyl shikimate-3-phosphate and inorganic phosphate. This is 3-phosphoshikimate 1-carboxyvinyltransferase from Blochmanniella pennsylvanica (strain BPEN).